Consider the following 274-residue polypeptide: MAHYFVGDVQGCFTELQKVLEKVDFNPSQDELWAVGDLVARGPDSLATLRFFKSLGDSAKTVLGNHDLHLMAIHGKLKRDKPSDNLKALLKADDINELIDWLRQQPLMRELPEQQLIMTHAGVPPQWSLETLRQESALVSHALKQDDYLEALISQMYTDSAERWEPTALGIARLRFCINALTRMRYLYVDGHLNFDCKQPPQDCTDPQLRPWYEYTSPLRQSHTLVFGHWAALMGNVNDKKLKALDTGCCWGEHLTLWHLEKDQKITQKRLKKS.

Belongs to the Ap4A hydrolase family.

It catalyses the reaction P(1),P(4)-bis(5'-adenosyl) tetraphosphate + H2O = 2 ADP + 2 H(+). Its function is as follows. Hydrolyzes diadenosine 5',5'''-P1,P4-tetraphosphate to yield ADP. The protein is Bis(5'-nucleosyl)-tetraphosphatase, symmetrical of Shewanella putrefaciens (strain CN-32 / ATCC BAA-453).